Consider the following 333-residue polypeptide: Protein-methionine-sulfoxide reductase catalytic subunit MsrP (333 aa).

A signal peptide (tat-type signal) is located at residues 1 to 43 (MSKQRKLTEADVTPESVFYQRRKVLQALGITAASLALPHNAQA). Residues Asn87, 90–91 (YE), Cys145, Thr180, Asn232, Arg237, and 248–250 (GIK) contribute to the Mo-molybdopterin site.

This sequence belongs to the MsrP family. Heterodimer of a catalytic subunit (MsrP) and a heme-binding subunit (MsrQ). The cofactor is Mo-molybdopterin. In terms of processing, predicted to be exported by the Tat system. The position of the signal peptide cleavage has not been experimentally proven.

The protein resides in the periplasm. It carries out the reaction L-methionyl-[protein] + a quinone + H2O = L-methionyl-(S)-S-oxide-[protein] + a quinol. The catalysed reaction is L-methionyl-[protein] + a quinone + H2O = L-methionyl-(R)-S-oxide-[protein] + a quinol. In terms of biological role, part of the MsrPQ system that repairs oxidized periplasmic proteins containing methionine sulfoxide residues (Met-O), using respiratory chain electrons. Thus protects these proteins from oxidative-stress damage caused by reactive species of oxygen and chlorine generated by the host defense mechanisms. MsrPQ is essential for the maintenance of envelope integrity under bleach stress, rescuing a wide series of structurally unrelated periplasmic proteins from methionine oxidation. The catalytic subunit MsrP is non-stereospecific, being able to reduce both (R-) and (S-) diastereoisomers of methionine sulfoxide. The chain is Protein-methionine-sulfoxide reductase catalytic subunit MsrP from Serratia proteamaculans (strain 568).